A 236-amino-acid chain; its full sequence is Orotidine 5'-phosphate decarboxylase (236 aa).

Residues D17, K39, 66-75 (DLKFYDIPNT), T125, R187, Q196, G216, and R217 each bind substrate. K68 (proton donor) is an active-site residue.

It belongs to the OMP decarboxylase family. Type 1 subfamily. As to quaternary structure, homodimer.

It carries out the reaction orotidine 5'-phosphate + H(+) = UMP + CO2. Its pathway is pyrimidine metabolism; UMP biosynthesis via de novo pathway; UMP from orotate: step 2/2. In terms of biological role, catalyzes the decarboxylation of orotidine 5'-monophosphate (OMP) to uridine 5'-monophosphate (UMP). This chain is Orotidine 5'-phosphate decarboxylase, found in Buchnera aphidicola subsp. Baizongia pistaciae (strain Bp).